The sequence spans 218 residues: LexA repressor (218 aa).

Residues 31-51 (IREIQDGLRISSTSVVAYNLR) constitute a DNA-binding region (H-T-H motif). Residues Ser137 and Lys176 each act as for autocatalytic cleavage activity in the active site.

The protein belongs to the peptidase S24 family. In terms of assembly, homodimer.

The catalysed reaction is Hydrolysis of Ala-|-Gly bond in repressor LexA.. Functionally, represses a number of genes involved in the response to DNA damage (SOS response), including recA and lexA. In the presence of single-stranded DNA, RecA interacts with LexA causing an autocatalytic cleavage which disrupts the DNA-binding part of LexA, leading to derepression of the SOS regulon and eventually DNA repair. In Roseiflexus sp. (strain RS-1), this protein is LexA repressor.